The sequence spans 440 residues: Thymidine phosphorylase (440 aa).

The protein belongs to the thymidine/pyrimidine-nucleoside phosphorylase family. As to quaternary structure, homodimer.

It carries out the reaction thymidine + phosphate = 2-deoxy-alpha-D-ribose 1-phosphate + thymine. It functions in the pathway pyrimidine metabolism; dTMP biosynthesis via salvage pathway; dTMP from thymine: step 1/2. Its function is as follows. The enzymes which catalyze the reversible phosphorolysis of pyrimidine nucleosides are involved in the degradation of these compounds and in their utilization as carbon and energy sources, or in the rescue of pyrimidine bases for nucleotide synthesis. This is Thymidine phosphorylase from Escherichia coli (strain K12 / DH10B).